The primary structure comprises 285 residues: 4-diphosphocytidyl-2-C-methyl-D-erythritol kinase (285 aa).

Residue Lys-10 is part of the active site. Position 93–103 (93–103 (PIGGGLGGGSS)) interacts with ATP. The active site involves Asp-135.

It belongs to the GHMP kinase family. IspE subfamily.

It carries out the reaction 4-CDP-2-C-methyl-D-erythritol + ATP = 4-CDP-2-C-methyl-D-erythritol 2-phosphate + ADP + H(+). Its pathway is isoprenoid biosynthesis; isopentenyl diphosphate biosynthesis via DXP pathway; isopentenyl diphosphate from 1-deoxy-D-xylulose 5-phosphate: step 3/6. Catalyzes the phosphorylation of the position 2 hydroxy group of 4-diphosphocytidyl-2C-methyl-D-erythritol. This chain is 4-diphosphocytidyl-2-C-methyl-D-erythritol kinase, found in Ruthia magnifica subsp. Calyptogena magnifica.